The primary structure comprises 64 residues: Bactridin-2 (64 aa).

The LCN-type CS-alpha/beta domain maps to 1-63 (KDGYLVGNDG…TWNRATNRCG (63 aa)). 4 cysteine pairs are disulfide-bonded: Cys-11–Cys-62, Cys-15–Cys-37, Cys-23–Cys-43, and Cys-27–Cys-45.

The protein belongs to the long (4 C-C) scorpion toxin superfamily. Sodium channel inhibitor family. Beta subfamily. As to expression, expressed by the venom gland.

The protein resides in the secreted. In terms of biological role, shows antibacterial activity against both Gram-positive bacteria (B.subtilis, M.luteus, E.faecalis) and Gram-negative bacteria (P.aeruginosa, Y.enterocolitica, A.calcoaceticus). Modifies membrane sodium permeability on Y.enterocolitica. Is toxic to mice, but is not to crabs. Induces concentration dependent haemolysis in human erythrocytes. Acts by inhibiting the sodium (Nav) currents. This chain is Bactridin-2, found in Tityus discrepans (Venezuelan scorpion).